A 505-amino-acid polypeptide reads, in one-letter code: MTTFTKLSDQDAPSISIHPARRLSKINPNIYAGFTEHMGRCIYGGIYDPGNSLSDENGFRKDVLEALKELNIPVVRYPGGNFMATYHWIDGVGPKEKRPARPELAWLGTETNQFGTDEFLKWCEVLGTEPYFCLNFGTGTLDEALAWVEYCNGTKDTYYANLRRKNGREEPYNVKYWALGNETWGPWQVEQMTKEAYAHKAYQWAKALKLLDPSLILILCGQDGTASWDYYTLKQCLLPAHSPLSTSTVPLIDMHSIHLYTSSPSHLPNVTAPLAAERAIEITSSLIDLARIENGVPPDQHRPTICFDEWNVWDPIRAEGSKGAEESYTLSDALAVAVFLNVFVRKSKDLGMACIAQSVNVISPLMTSKDGITKQTTYWPLYLFSKYMRGWTISVHLSCASYEGETSPKWVRGVKDTPWLDVSATLGEDGYVNVAVVNIHEEKDIRSSIDGPSGTVSVFTVTGERVQACNMNGKEEVAVTESTWEAREQFVFPKHSLTLLRWKLA.

Residues Asn152, Asn181, and Asn269 are each glycosylated (N-linked (GlcNAc...) asparagine).

Belongs to the glycosyl hydrolase 51 family.

It localises to the secreted. It carries out the reaction Hydrolysis of terminal non-reducing alpha-L-arabinofuranoside residues in alpha-L-arabinosides.. Its pathway is glycan metabolism; L-arabinan degradation. In terms of biological role, alpha-L-arabinofuranosidase involved in the degradation of arabinoxylan, a major component of plant hemicellulose. Acts only on small linear 1,5-alpha-linked L-arabinofuranosyl oligosaccharides. The chain is Probable alpha-L-arabinofuranosidase C (abfC) from Aspergillus niger (strain ATCC MYA-4892 / CBS 513.88 / FGSC A1513).